The following is a 419-amino-acid chain: G protein-activated inward rectifier potassium channel 4 (419 aa).

Over 1 to 86 the chain is Cytoplasmic; it reads MAGDSRNAMN…LFTTLVDLKW (86 aa). Phosphoserine is present on S5. Residues 87-111 traverse the membrane as a helical segment; it reads RFNLLVFTMVYTITWLFFGFIWWLI. Residues 112 to 135 lie on the Extracellular side of the membrane; the sequence is AYVRGDLDHVGDQEWIPCVENLSG. The segment at residues 136–147 is an intramembrane region (helical; Pore-forming); sequence FVSAFLFSIETE. An intramembrane region (pore-forming) is located at residues 148-154; sequence TTIGYGF. The short motif at 149-154 is the Selectivity filter element; it reads TIGYGF. Over 155-163 the chain is Extracellular; that stretch reads RVITEKCPE. A helical membrane pass occupies residues 164-185; that stretch reads GIILLLVQAILGSIVNAFMVGC. The Cytoplasmic portion of the chain corresponds to 186–419; it reads MFVKISQPKK…SVSRATRGSM (234 aa). Low complexity predominate over residues 380–390; the sequence is LPSPPLLGGCA. The interval 380–419 is disordered; that stretch reads LPSPPLLGGCAEAEKEAEAEHDEEEEPNGLSVSRATRGSM. Over residues 409-419 the composition is skewed to polar residues; it reads LSVSRATRGSM.

The protein belongs to the inward rectifier-type potassium channel (TC 1.A.2.1) family. KCNJ5 subfamily. As to quaternary structure, associates with KCNJ3/GIRK1 or KCNJ6/GRIK2 to form a G-protein-activated heteromultimer pore-forming unit. The resulting inward current is much larger. As to expression, most abundant in heart tissue where it is found predominantly in atria. Also found in brain, kidney, liver, spleen, lung and thymus.

It localises to the membrane. The enzyme catalyses K(+)(in) = K(+)(out). Heteromultimer composed of KCNJ3/GIRK1 and KCNJ5/GIRK4 is activated by phosphatidylinositol 4,5 biphosphate (PtdIns(4,5)P2). In terms of biological role, inward rectifier potassium channels are characterized by a greater tendency to allow potassium to flow into the cell rather than out of it. Their voltage dependence is regulated by the concentration of extracellular potassium; as external potassium is raised, the voltage range of the channel opening shifts to more positive voltages. The inward rectification is mainly due to the blockage of outward current by internal magnesium. Can be blocked by external barium. This potassium channel is controlled by G proteins. This is G protein-activated inward rectifier potassium channel 4 (Kcnj5) from Rattus norvegicus (Rat).